A 106-amino-acid polypeptide reads, in one-letter code: Large ribosomal subunit protein P1A (106 aa).

The tract at residues Ala-74 to Asp-106 is disordered. Residues Glu-82 to Met-100 are compositionally biased toward acidic residues.

Belongs to the eukaryotic ribosomal protein P1/P2 family. Component of the large ribosomal subunit (LSU). Mature ribosomes consist of a small (40S) and a large (60S) subunit. The 40S subunit contains about 32 different proteins and 1 molecule of RNA (18S). The 60S subunit contains 45 different proteins and 3 molecules of RNA (25S, 5.8S and 5S). The 5 acidic ribosomal P-proteins form the stalk structure of the 60S subunit. They are organized as a pentameric complex in which uL10/P0 interacts with 2 heterodimers, P1A-P2B and P1B-P2A. In terms of processing, phosphorylated.

It localises to the cytoplasm. Component of the ribosome, a large ribonucleoprotein complex responsible for the synthesis of proteins in the cell. The small ribosomal subunit (SSU) binds messenger RNAs (mRNAs) and translates the encoded message by selecting cognate aminoacyl-transfer RNA (tRNA) molecules. The large subunit (LSU) contains the ribosomal catalytic site termed the peptidyl transferase center (PTC), which catalyzes the formation of peptide bonds, thereby polymerizing the amino acids delivered by tRNAs into a polypeptide chain. The nascent polypeptides leave the ribosome through a tunnel in the LSU and interact with protein factors that function in enzymatic processing, targeting, and the membrane insertion of nascent chains at the exit of the ribosomal tunnel. The polypeptide is Large ribosomal subunit protein P1A (RPP1A) (Candida albicans (strain SC5314 / ATCC MYA-2876) (Yeast)).